The following is a 279-amino-acid chain: Undecaprenyl-diphosphatase (279 aa).

The next 8 helical transmembrane spans lie at 2–22 (LFIE…TEWL), 44–64 (AFME…VIVI), 85–105 (WQLW…AVPL), 113–133 (FNHM…FLWI), 163–183 (VLSI…AIIL), 188–208 (TVAA…YSGL), 225–245 (LLVL…VIKL), and 255–275 (FTVF…YSVF).

The protein belongs to the UppP family.

It localises to the cell membrane. It catalyses the reaction di-trans,octa-cis-undecaprenyl diphosphate + H2O = di-trans,octa-cis-undecaprenyl phosphate + phosphate + H(+). Catalyzes the dephosphorylation of undecaprenyl diphosphate (UPP). Confers resistance to bacitracin. This is Undecaprenyl-diphosphatase from Streptococcus equi subsp. equi (strain 4047).